We begin with the raw amino-acid sequence, 290 residues long: Barley B recombinant-like protein C (290 aa).

Disordered regions lie at residues 60–90 (PHHH…YGMM) and 102–183 (QPEP…RKNI). Residues 104–116 (EPQPQLQHPPSPP) are compositionally biased toward pro residues. Over residues 138-158 (PPKKRQQGRQPKVLRPKKPKK) the composition is skewed to basic residues.

The protein belongs to the BBR/BPC family.

The protein resides in the nucleus. Its function is as follows. Transcriptional regulator that specifically binds to GA-rich elements (GAGA-repeats) present in regulatory sequences of genes involved in developmental processes. The polypeptide is Barley B recombinant-like protein C (Oryza sativa subsp. japonica (Rice)).